The following is a 113-amino-acid chain: Heavy metal-associated isoprenylated plant protein 15 (113 aa).

The HMA domain maps to 1-65 (MIVWMGVYDQ…KWGKAKLTLY (65 aa)). Positions 69–89 (DALKEAKIAEAKQKREEIERE) form a coiled coil. Cys-110 carries the cysteine methyl ester modification. Cys-110 carries the S-farnesyl cysteine lipid modification. The propeptide at 111–113 (VIC) is removed in mature form.

The protein belongs to the HIPP family. In terms of tissue distribution, expressed in embryo sacs.

Probable heavy-metal-binding protein. This is Heavy metal-associated isoprenylated plant protein 15 from Arabidopsis thaliana (Mouse-ear cress).